The following is a 266-amino-acid chain: tRNA pseudouridine synthase A (266 aa).

Aspartate 55 serves as the catalytic Nucleophile. Tyrosine 110 is a binding site for substrate.

Belongs to the tRNA pseudouridine synthase TruA family.

The enzyme catalyses uridine(38/39/40) in tRNA = pseudouridine(38/39/40) in tRNA. Its function is as follows. Formation of pseudouridine at positions 38, 39 and 40 in the anticodon stem and loop of transfer RNAs. This Thermococcus sibiricus (strain DSM 12597 / MM 739) protein is tRNA pseudouridine synthase A.